The sequence spans 675 residues: Protein kintoun (675 aa).

Disordered regions lie at residues 98–131, 265–293, 310–340, and 509–659; these read ASKKQQQEQEKQEKEQQQQAAGAGKPEGPGKQGA, AGEGAGGRVRPRPDVPGVPDLPGAKTAPP, EGGAGSSSRSTFSFDKSRKAGGTEAAGAVAK, and EAAH…AAPT. A compositionally biased stretch (basic and acidic residues) spans 102-113; that stretch reads QQQEQEKQEKEQ. The segment covering 279-293 has biased composition (low complexity); the sequence is VPGVPDLPGAKTAPP. Residues 529 to 543 show a composition bias toward low complexity; sequence AAAASSGAAPAPAAA. Over residues 544 to 553 the composition is skewed to acidic residues; that stretch reads SEEEEEEDKE. The span at 564-577 shows a compositional bias: low complexity; that stretch reads DPAAAAAAAGASSG. Residues 579–596 are compositionally biased toward basic and acidic residues; that stretch reads ELTENERKWRELHARQQQ. Low complexity-rich tracts occupy residues 604–617 and 628–659; these read AAEAAAAAAAAAAE and VAQGGAAAAAESVAAAKQQVQQQPVAAAAAPT.

This sequence belongs to the PIH1 family. Kintoun subfamily.

The protein resides in the cytoplasm. Its function is as follows. Required for cytoplasmic pre-assembly of axonemal dyneins, thereby playing a central role in motility in cilia and flagella. Involved in pre-assembly of dynein arm complexes in the cytoplasm before intraflagellar transport loads them for the ciliary compartment. This Chlamydomonas reinhardtii (Chlamydomonas smithii) protein is Protein kintoun (pf13).